The primary structure comprises 237 residues: Large ribosomal subunit protein uL22m (237 aa).

It belongs to the universal ribosomal protein uL22 family.

It is found in the mitochondrion. This chain is Large ribosomal subunit protein uL22m (mrpl22), found in Dictyostelium discoideum (Social amoeba).